Reading from the N-terminus, the 446-residue chain is tRNA modification GTPase MnmE (446 aa).

R24, E81, and K120 together coordinate (6S)-5-formyl-5,6,7,8-tetrahydrofolate. A TrmE-type G domain is found at 216–368; it reads GLHAVLIGPP…LHTRLRELAL (153 aa). A K(+)-binding site is contributed by N226. GTP is bound by residues 226–231, 245–251, and 270–273; these read NAGKSS, TDVAGTT, and DTAG. S230 provides a ligand contact to Mg(2+). T245, V247, and T250 together coordinate K(+). T251 is a binding site for Mg(2+). K446 lines the (6S)-5-formyl-5,6,7,8-tetrahydrofolate pocket.

This sequence belongs to the TRAFAC class TrmE-Era-EngA-EngB-Septin-like GTPase superfamily. TrmE GTPase family. As to quaternary structure, homodimer. Heterotetramer of two MnmE and two MnmG subunits. K(+) serves as cofactor.

The protein resides in the cytoplasm. Its function is as follows. Exhibits a very high intrinsic GTPase hydrolysis rate. Involved in the addition of a carboxymethylaminomethyl (cmnm) group at the wobble position (U34) of certain tRNAs, forming tRNA-cmnm(5)s(2)U34. This is tRNA modification GTPase MnmE from Xanthomonas campestris pv. campestris (strain 8004).